We begin with the raw amino-acid sequence, 350 residues long: NADH-quinone oxidoreductase subunit H (350 aa).

A run of 8 helical transmembrane segments spans residues 5 to 25 (FIIEKSVVIVVVFAVTMIMAM), 76 to 96 (FLFVVGPAIAMSTALMTSAVI), 118 to 138 (IALLYIFGVLSVGVYGIMIGG), 162 to 182 (IAMGLSMIALLMMTGTMSLKV), 190 to 210 (MNWNVFYQPLSFLIFLICSFA), 243 to 263 (LFAEYASMFISSTIISVLFFG), 284 to 304 (LLGIAVLFVKICFFIFFYMWV), and 319 to 339 (LGWRILIPLSIINIMITGAVI).

Belongs to the complex I subunit 1 family. In terms of assembly, NDH-1 is composed of 14 different subunits. Subunits NuoA, H, J, K, L, M, N constitute the membrane sector of the complex.

It is found in the cell inner membrane. It catalyses the reaction a quinone + NADH + 5 H(+)(in) = a quinol + NAD(+) + 4 H(+)(out). Its function is as follows. NDH-1 shuttles electrons from NADH, via FMN and iron-sulfur (Fe-S) centers, to quinones in the respiratory chain. The immediate electron acceptor for the enzyme in this species is believed to be ubiquinone. Couples the redox reaction to proton translocation (for every two electrons transferred, four hydrogen ions are translocated across the cytoplasmic membrane), and thus conserves the redox energy in a proton gradient. This subunit may bind ubiquinone. The sequence is that of NADH-quinone oxidoreductase subunit H from Flavobacterium johnsoniae (strain ATCC 17061 / DSM 2064 / JCM 8514 / BCRC 14874 / CCUG 350202 / NBRC 14942 / NCIMB 11054 / UW101) (Cytophaga johnsonae).